The following is a 260-amino-acid chain: Snake venom serine protease homolog 2 (260 aa).

A signal peptide spans 1–18 (MVLIRVLANLLVLQLSYA). The propeptide occupies 19-24 (QKSSEL). Residues 25 to 251 (VIGGDECNIN…YTDWIQSIIA (227 aa)) form the Peptidase S1 domain. Cystine bridges form between Cys-31–Cys-165, Cys-52–Cys-68, Cys-100–Cys-258, Cys-144–Cys-212, Cys-176–Cys-191, and Cys-202–Cys-227. Asn-123 is a glycosylation site (N-linked (GlcNAc...) asparagine). Asn-253 is a glycosylation site (N-linked (GlcNAc...) asparagine).

The protein belongs to the peptidase S1 family. Snake venom subfamily. In terms of tissue distribution, expressed by the venom gland.

The protein localises to the secreted. Its function is as follows. Snake venom serine protease homolog that may act in the hemostasis system of the prey. The sequence is that of Snake venom serine protease homolog 2 from Macrovipera lebetinus (Levantine viper).